Reading from the N-terminus, the 196-residue chain is Transmembrane protein 126A (196 aa).

Residues 1-34 (MESHKPSTSKDDLILNIISRKIKQLPESDRNLLE) are Mitochondrial matrix-facing. A helical transmembrane segment spans residues 35–55 (YGSAYIGLNAAFGGLIANSLF). Residues 56–57 (RR) lie on the Mitochondrial intermembrane side of the membrane. The helical transmembrane segment at 58-78 (ILNVTQARLASSLPMAVIPFL) threads the bilayer. Residues 79-106 (TANLSYQSLVSLPLSTGDLNCETCTTTR) lie on the Mitochondrial matrix side of the membrane. The helical transmembrane segment at 107–127 (GALVGLVMGGLYPILLAIPVN) threads the bilayer. At 128 to 159 (GGLAARYESSPLPQRGNIFNYWITVSKPVFRK) the chain is on the mitochondrial intermembrane side. The chain crosses the membrane as a helical span at residues 160 to 176 (MLFPTLLQTVFASYLGS). The Mitochondrial matrix portion of the chain corresponds to 177–196 (RQYKLLIKALQLPEPDLEIH).

This sequence belongs to the TMEM126 family. Interacts with OXA1L; promoting cotranslational quality control in mitochondria. In the retina, significant levels of expression are detected in the ganglion cell layer, the optic nerve head, the outer plexiform layer, and in the outer ellipsoide length of photoreceptor inner segments.

It is found in the mitochondrion inner membrane. Its function is as follows. Protein required for the cotranslational protein quality control in the inner membrane of the mitochondria. Associates with newly synthesized polypeptides and may act as a chaperone that cooperates with OXA1L for the insertion of newly synthesized mitochondrial proteins into the inner membrane. Required for the assembly of the ND4 module of mitochondrial complex I. The chain is Transmembrane protein 126A from Mus musculus (Mouse).